The chain runs to 134 residues: UPF0102 protein Dvul_2148 (134 aa).

It belongs to the UPF0102 family.

The polypeptide is UPF0102 protein Dvul_2148 (Nitratidesulfovibrio vulgaris (strain DP4) (Desulfovibrio vulgaris)).